The primary structure comprises 106 residues: UPF0145 protein APJL_0492 (106 aa).

This sequence belongs to the UPF0145 family.

The sequence is that of UPF0145 protein APJL_0492 from Actinobacillus pleuropneumoniae serotype 3 (strain JL03).